Consider the following 636-residue polypeptide: Probable potassium transport system protein Kup (636 aa).

The next 12 helical transmembrane spans lie at 23–43, 63–83, 114–134, 150–170, 182–202, 217–237, 260–280, 298–318, 350–370, 379–399, 407–427, and 432–452; these read LVIGAIGVVFGDIGTSPLYSL, IISLLFWAMTIVVSIKYVVFV, VLMMLGIFGACMFYGDAVITP, PQLSRFVIPITLVILVALFLI, FGPVMVVWFVTLGLLGLYNLV, ISFLIAHSLQAFIVLGSVFLV, WFVLVMPCLILNYFGQGAMLL, LLIPMVVLATCATVIASQAVI, IYLPVINWILLVLVVAVVISF, AYGIAVTTTMVITTFLAAVVM, PALVTLLGLSFLLVDLAFFAA, and VAEGGWFPLLLGSTAFFLLMT.

It belongs to the HAK/KUP transporter (TC 2.A.72) family.

Its subcellular location is the cell inner membrane. The enzyme catalyses K(+)(in) + H(+)(in) = K(+)(out) + H(+)(out). Functionally, transport of potassium into the cell. Likely operates as a K(+):H(+) symporter. This Cupriavidus pinatubonensis (strain JMP 134 / LMG 1197) (Cupriavidus necator (strain JMP 134)) protein is Probable potassium transport system protein Kup.